The chain runs to 208 residues: Large ribosomal subunit protein uL4 (208 aa).

Residues 44–89 are disordered; that stretch reads RRQGTHKAKNRSEVRGGGRKPYRQKGTGHARQGSTRSPLMTGGGTI. Residues 60–71 are compositionally biased toward basic residues; that stretch reads GGRKPYRQKGTG.

Belongs to the universal ribosomal protein uL4 family. In terms of assembly, part of the 50S ribosomal subunit.

In terms of biological role, one of the primary rRNA binding proteins, this protein initially binds near the 5'-end of the 23S rRNA. It is important during the early stages of 50S assembly. It makes multiple contacts with different domains of the 23S rRNA in the assembled 50S subunit and ribosome. Its function is as follows. Forms part of the polypeptide exit tunnel. In Chlorobium phaeobacteroides (strain BS1), this protein is Large ribosomal subunit protein uL4.